The sequence spans 449 residues: Putative recombination initiation defects 3 (449 aa).

The disordered stretch occupies residues 21 to 56 (LRRSAEPQASQQLRSQQSQQSFSQGPSSSQRGCGGF). A compositionally biased stretch (low complexity) spans 28-50 (QASQQLRSQQSQQSFSQGPSSSQ). Residues 437–441 (RTKRK) carry the Nuclear localization signal motif.

Interacts with PRD1; this interaction facilitates a binding to DFO.

Its subcellular location is the nucleus. Functionally, involved in DNA cleavage that forms the double-strand breaks (DSB) that initiate meiotic recombination. This chain is Putative recombination initiation defects 3, found in Arabidopsis thaliana (Mouse-ear cress).